The sequence spans 411 residues: ATP-dependent RNA helicase eIF4A (411 aa).

A disordered region spans residues 1 to 23 (MSKPEDTSAAAAAPAGEAGNNLN). Low complexity predominate over residues 9–19 (AAAAAPAGEAG). Residues 38–66 (DNFDNMELKEELLRGVYAYGFERPSAIQA) carry the Q motif motif. The Helicase ATP-binding domain occupies 69 to 239 (IVPVIKGHDV…KKFMRDPIRI (171 aa)). Residue 82–89 (AQSGTGKT) participates in ATP binding. Residues 187–190 (DEAD) carry the DEAD box motif. The Helicase C-terminal domain maps to 250-411 (GIKQFYVAVE…EMPLNVADLI (162 aa)).

Belongs to the DEAD box helicase family. eIF4A subfamily. As to quaternary structure, component of the eIF4F complex, which composition varies with external and internal environmental conditions. It is composed of at least eIF4A, eIF4E and eIF4G.

The protein localises to the cytoplasm. It catalyses the reaction ATP + H2O = ADP + phosphate + H(+). In terms of biological role, ATP-dependent RNA helicase which is a subunit of the eIF4F complex involved in cap recognition and is required for mRNA binding to ribosome. In the current model of translation initiation, eIF4A unwinds RNA secondary structures in the 5'-UTR of mRNAs which is necessary to allow efficient binding of the small ribosomal subunit, and subsequent scanning for the initiator codon. This chain is ATP-dependent RNA helicase eIF4A (TIF1), found in Mycosarcoma maydis (Corn smut fungus).